A 306-amino-acid polypeptide reads, in one-letter code: Ribonuclease Z (306 aa).

Zn(2+) is bound by residues H63, H65, D67, H68, H140, D211, and H269. D67 serves as the catalytic Proton acceptor.

Belongs to the RNase Z family. Homodimer. Zn(2+) serves as cofactor.

It carries out the reaction Endonucleolytic cleavage of RNA, removing extra 3' nucleotides from tRNA precursor, generating 3' termini of tRNAs. A 3'-hydroxy group is left at the tRNA terminus and a 5'-phosphoryl group is left at the trailer molecule.. Zinc phosphodiesterase, which displays some tRNA 3'-processing endonuclease activity. Probably involved in tRNA maturation, by removing a 3'-trailer from precursor tRNA. The protein is Ribonuclease Z of Listeria monocytogenes serotype 4b (strain CLIP80459).